The primary structure comprises 51 residues: DNA-directed RNA polymerase subunit Rpo12 (51 aa).

Cys-14, Cys-29, and Cys-32 together coordinate Zn(2+).

The protein belongs to the archaeal Rpo12/eukaryotic RPC10 RNA polymerase subunit family. Part of the RNA polymerase complex. Requires Zn(2+) as cofactor.

The protein resides in the cytoplasm. It catalyses the reaction RNA(n) + a ribonucleoside 5'-triphosphate = RNA(n+1) + diphosphate. DNA-dependent RNA polymerase (RNAP) catalyzes the transcription of DNA into RNA using the four ribonucleoside triphosphates as substrates. The polypeptide is DNA-directed RNA polymerase subunit Rpo12 (Methanopyrus kandleri (strain AV19 / DSM 6324 / JCM 9639 / NBRC 100938)).